The chain runs to 313 residues: Glucosyl-dolichyl phosphate glucuronosyltransferase (313 aa).

The chain crosses the membrane as a helical span at residues 284 to 304; the sequence is LIAIFVFTAAVGFGYVYGLLT.

The protein belongs to the glycosyltransferase 2 family.

The protein resides in the cell membrane. It carries out the reaction an archaeal dolichyl alpha-D-glucosyl phosphate + UDP-alpha-D-glucuronate = an archaeal dolichyl beta-D-glucuronosyl-(1-&gt;4)-alpha-D-glucosyl phosphate + UDP + H(+). It participates in cell surface structure biogenesis; S-layer biogenesis. Functionally, involved in the protein N-glycosylation pathway responsible for the assembly and attachment of an N-linked pentasaccharide that decorates the S-layer glycoprotein and flagellins. Catalyzes the transfer of a glucuronate residue (GlcA) to a glucose residue already bound to a dolichol phosphate (DolP), a compound that serves as a glycan lipid carrier in Archaea. In vitro, is able to add GlcA to DolP-Glc in which the omega-position isoprene is not saturated. However, the likely physiological lipid substrate is alpha,omega-saturated. This chain is Glucosyl-dolichyl phosphate glucuronosyltransferase, found in Haloferax volcanii (strain ATCC 29605 / DSM 3757 / JCM 8879 / NBRC 14742 / NCIMB 2012 / VKM B-1768 / DS2) (Halobacterium volcanii).